The sequence spans 249 residues: ATP-dependent Clp protease proteolytic subunit (249 aa).

Serine 107 (nucleophile) is an active-site residue. Residue histidine 132 is part of the active site. The segment at 212–249 (ESASQDNSLDPDAPDESASQDNSLDPDAPDETRPPKLR) is disordered.

Belongs to the peptidase S14 family. As to quaternary structure, component of the chloroplastic Clp protease core complex.

The protein resides in the plastid. Its subcellular location is the chloroplast stroma. The catalysed reaction is Hydrolysis of proteins to small peptides in the presence of ATP and magnesium. alpha-casein is the usual test substrate. In the absence of ATP, only oligopeptides shorter than five residues are hydrolyzed (such as succinyl-Leu-Tyr-|-NHMec, and Leu-Tyr-Leu-|-Tyr-Trp, in which cleavage of the -Tyr-|-Leu- and -Tyr-|-Trp bonds also occurs).. In terms of biological role, cleaves peptides in various proteins in a process that requires ATP hydrolysis. Has a chymotrypsin-like activity. Plays a major role in the degradation of misfolded proteins. The chain is ATP-dependent Clp protease proteolytic subunit from Oenothera elata subsp. hookeri (Hooker's evening primrose).